A 396-amino-acid polypeptide reads, in one-letter code: Elongation factor Tu (396 aa).

The 197-residue stretch at 10–206 (KAHVNIGTIG…AVDEYIPDPV (197 aa)) folds into the tr-type G domain. The G1 stretch occupies residues 19–26 (GHVDHGKT). 19-26 (GHVDHGKT) serves as a coordination point for GTP. Threonine 26 lines the Mg(2+) pocket. The tract at residues 62–66 (GITIN) is G2. The G3 stretch occupies residues 83–86 (DAPG). Residues 83-87 (DAPGH) and 138-141 (NKSD) each bind GTP. The segment at 138–141 (NKSD) is G4. A G5 region spans residues 176–178 (SAL).

Belongs to the TRAFAC class translation factor GTPase superfamily. Classic translation factor GTPase family. EF-Tu/EF-1A subfamily. In terms of assembly, monomer.

The protein localises to the cytoplasm. It carries out the reaction GTP + H2O = GDP + phosphate + H(+). In terms of biological role, GTP hydrolase that promotes the GTP-dependent binding of aminoacyl-tRNA to the A-site of ribosomes during protein biosynthesis. The chain is Elongation factor Tu from Micrococcus luteus (Micrococcus lysodeikticus).